Consider the following 635-residue polypeptide: Cytoplasmic polyadenylation element-binding protein 4 (635 aa).

Disordered regions lie at residues 1-70 (MQDD…TLRL), 149-284 (GFGG…GFNT), and 337-369 (LFPM…PHQN). A compositionally biased stretch (polar residues) spans 14-30 (PQLQQESQEGQDKQTLS). Positions 166-182 (PSPHPHFQHPHNQHRRS) are enriched in basic residues. Residues 216 to 231 (GSYQSPSSTPSSTSWS) are compositionally biased toward low complexity. Over residues 232 to 241 (PGGGYGGWGS) the composition is skewed to gly residues. A compositionally biased stretch (polar residues) spans 254-283 (PLNSISPLKKSFPNNQTQTQKYPRNNSGFN). Over residues 341–353 (EDERSYGEDERSD) the composition is skewed to basic and acidic residues. RRM domains follow at residues 378-469 (RKVF…PWNL) and 486-568 (KTIF…PYVL).

It belongs to the RRM CPEB family.

It localises to the cytoplasm. The protein resides in the cell projection. It is found in the dendrite. The protein localises to the dendritic spine. Its subcellular location is the postsynaptic density. It localises to the axon. The protein resides in the growth cone. It is found in the endoplasmic reticulum. The protein localises to the perinuclear region. In terms of biological role, sequence-specific RNA-binding protein that binds to the cytoplasmic polyadenylation element (CPE), an uridine-rich sequence element (consensus sequence 5'-UUUUUAU-3') within the mRNA 3'-UTR. RNA binding results in a clear conformational change analogous to the Venus fly trap mechanism. The chain is Cytoplasmic polyadenylation element-binding protein 4 (cpeb4) from Danio rerio (Zebrafish).